A 173-amino-acid polypeptide reads, in one-letter code: MSGEHLQVVHGDITRMEVDAIVNAANSGLLGGGGVDGAIHGAGGSAIKEACRAIRDTQGGCPTGEAVITTGGHLPAPYVIHAVGPVWQGGDQGEDELLANAYRNSIRLAAQHHLRRLAFPNISTGIYAFPRERAADIAIAAVREALAAAPEIEQVTFVCFDDENYRLYRERLS.

A Macro domain is found at Met-1–Ser-173.

This sequence belongs to the MacroD-type family.

The protein is Macro domain-containing protein in gbd 3'region of Cupriavidus necator (Alcaligenes eutrophus).